Reading from the N-terminus, the 316-residue chain is Transaldolase A (316 aa).

K131 functions as the Schiff-base intermediate with substrate in the catalytic mechanism.

The protein belongs to the transaldolase family. Type 1 subfamily. As to quaternary structure, homodimer.

The protein localises to the cytoplasm. The enzyme catalyses D-sedoheptulose 7-phosphate + D-glyceraldehyde 3-phosphate = D-erythrose 4-phosphate + beta-D-fructose 6-phosphate. Its pathway is carbohydrate degradation; pentose phosphate pathway; D-glyceraldehyde 3-phosphate and beta-D-fructose 6-phosphate from D-ribose 5-phosphate and D-xylulose 5-phosphate (non-oxidative stage): step 2/3. Transaldolase is important for the balance of metabolites in the pentose-phosphate pathway. The sequence is that of Transaldolase A from Shigella flexneri.